Consider the following 375-residue polypeptide: Alcohol dehydrogenase 1C (375 aa).

N-acetylserine is present on serine 2. Phosphoserine is present on serine 23. Zn(2+) contacts are provided by cysteine 47, histidine 68, cysteine 98, cysteine 101, cysteine 104, cysteine 112, and cysteine 175. NAD(+) contacts are provided by residues 200–205, aspartate 224, lysine 229, isoleucine 270, 293–295, 318–320, and arginine 370; these read GLGGVG, VGV, and AIF.

It belongs to the zinc-containing alcohol dehydrogenase family. In terms of assembly, dimer of identical or non-identical chains of class I alcohol dehydrogenase: ADH1A, ADH1B, and ADH1C. Zn(2+) serves as cofactor. In terms of tissue distribution, expressed in kidney.

It localises to the cytoplasm. The catalysed reaction is a primary alcohol + NAD(+) = an aldehyde + NADH + H(+). The enzyme catalyses ethanol + NAD(+) = acetaldehyde + NADH + H(+). Functionally, alcohol dehydrogenase. Exhibits high activity for ethanol oxidation and plays a major role in ethanol catabolism. The sequence is that of Alcohol dehydrogenase 1C (ADH1C) from Papio hamadryas (Hamadryas baboon).